Reading from the N-terminus, the 141-residue chain is Nucleoside diphosphate kinase (141 aa).

Residues Lys-11, Phe-59, Arg-87, Thr-93, Arg-104, and Asn-114 each coordinate ATP. Residue His-117 is the Pros-phosphohistidine intermediate of the active site.

It belongs to the NDK family. Homotetramer. Requires Mg(2+) as cofactor.

It localises to the cytoplasm. The catalysed reaction is a 2'-deoxyribonucleoside 5'-diphosphate + ATP = a 2'-deoxyribonucleoside 5'-triphosphate + ADP. It carries out the reaction a ribonucleoside 5'-diphosphate + ATP = a ribonucleoside 5'-triphosphate + ADP. Its function is as follows. Major role in the synthesis of nucleoside triphosphates other than ATP. The ATP gamma phosphate is transferred to the NDP beta phosphate via a ping-pong mechanism, using a phosphorylated active-site intermediate. The sequence is that of Nucleoside diphosphate kinase from Bordetella petrii (strain ATCC BAA-461 / DSM 12804 / CCUG 43448).